A 113-amino-acid polypeptide reads, in one-letter code: Large ribosomal subunit protein uL22 (113 aa).

Belongs to the universal ribosomal protein uL22 family. As to quaternary structure, part of the 50S ribosomal subunit.

Its function is as follows. This protein binds specifically to 23S rRNA; its binding is stimulated by other ribosomal proteins, e.g. L4, L17, and L20. It is important during the early stages of 50S assembly. It makes multiple contacts with different domains of the 23S rRNA in the assembled 50S subunit and ribosome. In terms of biological role, the globular domain of the protein is located near the polypeptide exit tunnel on the outside of the subunit, while an extended beta-hairpin is found that lines the wall of the exit tunnel in the center of the 70S ribosome. This chain is Large ribosomal subunit protein uL22, found in Thermus thermophilus (strain ATCC BAA-163 / DSM 7039 / HB27).